The primary structure comprises 482 residues: MSLEDSLRSLSLDYLNLLINGQAFSDVVFSVEGRLVHAHRCILAARSLFFRKFFCGPDPPSGLDPSGNRVNPSGSARSGVIPVNSVGYEVFLLMLQFLYSGQVSIVPQKHEPRPNCGDRGCWHTHCTSAVDLALDTLAAARYFGVEQLALLTQKQLASMVEKASIEDVMKVLLASRKQDMHQLWTTCSHLVAKSGLPPEVLAKHLPIDIIAKIEELRIKTSLSRRSLMPHHHHPHHHDHLTAAADLEDQKIRRMRRALDSSDVELVKLMVMGEGLNLDEALALPYAVENCSREVVKALLELGAADVNFPAGPTGKTPLHIAAEMVSPDMVAVLLDHHADPNVRTVDGVTPLDILRTLTSDFLFKGAVPGLTHIEPNKLRLCLELVQSAALVMSREEGNNNNSNNNNNATASSATNMYPHHNMNEDHHHSHNNNNMDSRLVYLNLGANTQMSTSRMDSGDDDNTHREAINNSMYHHHSHGHDY.

A BTB domain is found at 25-107; that stretch reads SDVVFSVEGR…LYSGQVSIVP (83 aa). The C2HC NPR-type zinc-finger motif lies at 113 to 127; it reads RPNCGDRGCWHTHCT. 4 residues coordinate Zn(2+): Cys-116, Cys-121, His-123, and Cys-126. ANK repeat units lie at residues 249–278, 279–308, 313–342, and 346–380; these read QKIR…LNLD, EALA…DVNF, TGKT…DPNV, and DGVT…KLRL. A disordered region spans residues 395 to 434; sequence EEGNNNNSNNNNNATASSATNMYPHHNMNEDHHHSHNNNN. The segment covering 398–415 has biased composition (low complexity); the sequence is NNNNSNNNNNATASSATN.

The protein belongs to the plant 'ANKYRIN-BTB/POZ' family. 'NOOT-BOP-COCH-like' (NBCL) subfamily. Homodimer. Expressed in the shoot apical meristem (SAM) at the base of the developing leaf where stipules are formed. Associated with functional and vestigial abscission zones (AZs), including pulvini.

It localises to the nucleus. The protein localises to the cytoplasm. The protein resides in the cell membrane. The protein operates within protein modification; protein ubiquitination. Functionally, may act as a substrate-specific adapter of an E3 ubiquitin-protein ligase complex (CUL3-RBX1-BTB) which mediates the ubiquitination and subsequent proteasomal degradation of target proteins. Transcriptional co-regulator involved in the promotion of leaf and floral meristem fate and determinacy. Promotes normal stipule growth and development. Required for the abscission of senescent organs, probably by regulating the cell wall disorganization in abscission zones (AZs, e.g. pulvini at the base of leaves). Involved in the coordination of the symbiotic nodule developmental program. Promotes the formation of root nodules by interacting directly with APP1 to modulate the expression of the nuclear transcription factor Y subunit (NF-YA1), a key nodulin. Necessary for the robust maintenance of nodule identity throughout the nodule developmental program. Involved in the regulation of indeterminate nodule identity in association with NOOT2. This is BTB/POZ domain and ankyrin repeat-containing protein NOOT1 from Medicago truncatula (Barrel medic).